The chain runs to 1100 residues: Beta-alanine-activating enzyme (1100 aa).

Residues His-162–Glu-181 form a disordered region. ATP is bound by residues Thr-197 to Lys-205, Asp-427, Arg-441, and Lys-526. The Carrier domain occupies Glu-552–Val-632. An O-(pantetheine 4'-phosphoryl)serine modification is found at Ser-591. The tract at residues Ser-643–Ser-671 is disordered. Phosphoserine is present on Ser-651.

It belongs to the ATP-dependent AMP-binding enzyme family.

Covalently binds beta-alanine in an ATP-dependent manner to form a thioester bond with its phosphopantetheine group and transfers it to an as yet unknown acceptor via an amide bond. May be required for a post-translational protein modification or for post-transcriptional modification of an RNA. This is Beta-alanine-activating enzyme (Aasdh) from Mus musculus (Mouse).